The primary structure comprises 21 residues: Venom nerve growth factor Bco12 (21 aa).

The protein belongs to the NGF-beta family. Homodimer; non-covalently linked. Glycosylated. In terms of tissue distribution, expressed by the venom gland.

It localises to the secreted. Nerve growth factor is important for the development and maintenance of the sympathetic and sensory nervous systems. It stimulates division and differentiation of sympathetic and embryonic sensory neurons as well as basal forebrain cholinergic neurons in the brain. Its relevance in the snake venom is not clear. However, it has been shown to inhibit metalloproteinase-dependent proteolysis of platelet glycoprotein Ib alpha, suggesting a metalloproteinase inhibition to prevent metalloprotease autodigestion and/or protection against prey proteases. Binds a lipid between the two protein chains in the homodimer. The lipid-bound form promotes histamine relase from mouse mast cells, contrary to the lipid-free form. This chain is Venom nerve growth factor Bco12, found in Bothrops cotiara (Cotiara).